A 215-amino-acid polypeptide reads, in one-letter code: Octanoyltransferase (215 aa).

Residues 31 to 206 (PDSQDEIWLV…QLVKHLDYAE (176 aa)) form the BPL/LPL catalytic domain. Substrate contacts are provided by residues 70–77 (RGGQVTYH), 137–139 (SLG), and 150–152 (GLA). The Acyl-thioester intermediate role is filled by C168.

It belongs to the LipB family.

Its subcellular location is the cytoplasm. The catalysed reaction is octanoyl-[ACP] + L-lysyl-[protein] = N(6)-octanoyl-L-lysyl-[protein] + holo-[ACP] + H(+). It participates in protein modification; protein lipoylation via endogenous pathway; protein N(6)-(lipoyl)lysine from octanoyl-[acyl-carrier-protein]: step 1/2. Functionally, catalyzes the transfer of endogenously produced octanoic acid from octanoyl-acyl-carrier-protein onto the lipoyl domains of lipoate-dependent enzymes. Lipoyl-ACP can also act as a substrate although octanoyl-ACP is likely to be the physiological substrate. The sequence is that of Octanoyltransferase from Pseudomonas putida (strain W619).